The primary structure comprises 237 residues: LexA repressor (237 aa).

Positions 26–46 form a DNA-binding region, H-T-H motif; the sequence is FDEMKDALDLRSKSGIHRLIT. Active-site for autocatalytic cleavage activity residues include Ser-158 and Lys-196.

Belongs to the peptidase S24 family. Homodimer.

The enzyme catalyses Hydrolysis of Ala-|-Gly bond in repressor LexA.. Its function is as follows. Represses a number of genes involved in the response to DNA damage (SOS response), including recA and lexA. In the presence of single-stranded DNA, RecA interacts with LexA causing an autocatalytic cleavage which disrupts the DNA-binding part of LexA, leading to derepression of the SOS regulon and eventually DNA repair. The polypeptide is LexA repressor (Rhodopseudomonas palustris (strain BisB18)).